A 459-amino-acid chain; its full sequence is MARHSVHHQAQRPPRAKNPQEQQRRPMGQTTLPAEQEESRVKCKNCGAFGHSARSKTCPIKRWSGALPLQALGSHKEKENLKPAKAQLPFTTPGPFTTNDREKERSPSPQQQQSEAPTQTFPRTPQEKMQEAWKEPAEDCLFLRHPTMPLPVHTTKKRSVLGPVSTGPPPVNKPEMRLLCPSGHNDSPQLSTCGPTKGHGRDVTASLLPVLKSSHQTPTLSARLPANRPDMSSHGALQPAMQALALGPGLKSQAEIKHPDADAKPRPQQVRKQCGQDSRTQAPDKEPAPVPTQTFQNPAKKARFSSFQTPALRTQLPDVGAVQTLQPPRTATGLGSKEAPKATAETAATKTATLQPRVNLQPAPSSPFLGPAQGCPVLQPGPPIHVPGRPGSVTFMRGDKGQKSPRFRMPPTSRPPENSASAQSPRFSRQPEGQGPQVSTSVLYEDLLVTSSSEDSDSD.

A compositionally biased stretch (basic residues) spans 1-10; that stretch reads MARHSVHHQA. 4 disordered regions span residues 1–41, 74–136, 153–239, and 259–459; these read MARH…ESRV, SHKE…WKEP, HTTK…ALQP, and PDAD…SDSD. The segment covering 125-136 has biased composition (basic and acidic residues); that stretch reads PQEKMQEAWKEP. The span at 184–194 shows a compositional bias: polar residues; it reads HNDSPQLSTCG. Over residues 341-353 the composition is skewed to low complexity; that stretch reads KATAETAATKTAT. The segment covering 415 to 427 has biased composition (polar residues); sequence PPENSASAQSPRF.

It belongs to the FAM90 family.

The chain is Protein FAM90A27P (FAM90A27P) from Homo sapiens (Human).